The following is a 146-amino-acid chain: Large ribosomal subunit protein mL49 (146 aa).

A mitochondrion-targeting transit peptide spans 1–38 (MISSCVTRCFGRGKCLPGPATASIYQTIRCISTNSNKA).

It belongs to the mitochondrion-specific ribosomal protein mL49 family. As to quaternary structure, component of the mitochondrial large ribosomal subunit (mt-LSU). Mature yeast 74S mitochondrial ribosomes consist of a small (37S) and a large (54S) subunit. The 37S small subunit contains a 15S ribosomal RNA (15S mt-rRNA) and 34 different proteins. The 54S large subunit contains a 21S rRNA (21S mt-rRNA) and 46 different proteins.

It localises to the mitochondrion. In terms of biological role, component of the mitochondrial ribosome (mitoribosome), a dedicated translation machinery responsible for the synthesis of mitochondrial genome-encoded proteins, including at least some of the essential transmembrane subunits of the mitochondrial respiratory chain. The mitoribosomes are attached to the mitochondrial inner membrane and translation products are cotranslationally integrated into the membrane. The chain is Large ribosomal subunit protein mL49 (IMG2) from Saccharomyces cerevisiae (strain ATCC 204508 / S288c) (Baker's yeast).